Here is a 99-residue protein sequence, read N- to C-terminus: Small ribosomal subunit protein uS19c (99 aa).

It belongs to the universal ribosomal protein uS19 family.

It localises to the plastid. The protein resides in the chloroplast. Protein S19 forms a complex with S13 that binds strongly to the 16S ribosomal RNA. The sequence is that of Small ribosomal subunit protein uS19c from Oenothera biennis (German evening primrose).